Here is a 511-residue protein sequence, read N- to C-terminus: 2,3-bisphosphoglycerate-independent phosphoglycerate mutase (511 aa).

Asp12 contributes to the Mn(2+) binding site. The residue at position 36 (Tyr36) is a Phosphotyrosine. Ser62 contacts Mn(2+). Residue Ser62 is the Phosphoserine intermediate of the active site. Residues His123, 153–154 (RD), Arg185, Arg191, 261–264 (RPDR), and Lys336 contribute to the substrate site. 5 residues coordinate Mn(2+): Asp403, His407, Asp444, His445, and His462.

This sequence belongs to the BPG-independent phosphoglycerate mutase family. As to quaternary structure, monomer. Mn(2+) serves as cofactor.

It carries out the reaction (2R)-2-phosphoglycerate = (2R)-3-phosphoglycerate. It functions in the pathway carbohydrate degradation; glycolysis; pyruvate from D-glyceraldehyde 3-phosphate: step 3/5. Essential for rapid growth and for sporulation. Catalyzes the interconversion of 2-phosphoglycerate and 3-phosphoglycerate. This Bacillus licheniformis (strain ATCC 14580 / DSM 13 / JCM 2505 / CCUG 7422 / NBRC 12200 / NCIMB 9375 / NCTC 10341 / NRRL NRS-1264 / Gibson 46) protein is 2,3-bisphosphoglycerate-independent phosphoglycerate mutase.